Reading from the N-terminus, the 124-residue chain is Histone H2A (124 aa).

A compositionally biased stretch (basic residues) spans 1 to 18 (MSGRGKGGKVKGKAKSRS). A disordered region spans residues 1-21 (MSGRGKGGKVKGKAKSRSNRA). Serine 2 is subject to N-acetylserine. A Phosphoserine modification is found at serine 2. Lysine 36 bears the N6-succinyllysine mark. Glutamine 104 is modified (N5-methylglutamine). A Glycyl lysine isopeptide (Lys-Gly) (interchain with G-Cter in ubiquitin) cross-link involves residue lysine 119. Threonine 120 bears the Phosphothreonine mark.

Belongs to the histone H2A family. As to quaternary structure, the nucleosome is a histone octamer containing two molecules each of H2A, H2B, H3 and H4 assembled in one H3-H4 heterotetramer and two H2A-H2B heterodimers. The octamer wraps approximately 147 bp of DNA. The chromatin-associated form, but not the free cytoplasmic form, is phosphorylated on Thr-120 by NHK-1 during mitosis, and dephosphorylated during S-phase. Also phosphorylated on Thr-120 by NHK-1 during prophase I of meiosis; which is required for acetylation of H3 'Lys-14' and H4 'Lys-5', diassembly of the synaptonemal complex, and karyosome formation. In terms of processing, monoubiquitination of Lys-119 by sce/dRING gives a specific tag for epigenetic transcriptional repression. Post-translationally, phosphorylation on Ser-2 is enhanced during mitosis. Phosphorylation on Ser-2 directly represses transcription.

It is found in the nucleus. Its subcellular location is the chromosome. In terms of biological role, core component of nucleosome. Nucleosomes wrap and compact DNA into chromatin, limiting DNA accessibility to the cellular machineries which require DNA as a template. Histones thereby play a central role in transcription regulation, DNA repair, DNA replication and chromosomal stability. DNA accessibility is regulated via a complex set of post-translational modifications of histones, also called histone code, and nucleosome remodeling. The protein is Histone H2A (His2A) of Drosophila erecta (Fruit fly).